We begin with the raw amino-acid sequence, 550 residues long: Acetyl-coenzyme A transporter 1 (550 aa).

Over 1–74 (MSPTISHKDN…KRSYRAELSS (74 aa)) the chain is Cytoplasmic. Phosphoserine is present on Ser42. A helical membrane pass occupies residues 75 to 95 (ILLLLFLYVLQGIPLGLAGSI). The Extracellular portion of the chain corresponds to 96 to 113 (PLILQSKNVSYTDQAFFS). The N-linked (GlcNAc...) asparagine glycan is linked to Asn103. A helical membrane pass occupies residues 114–134 (FVFWPFSLKLLWAPLVDAVYF). The Cytoplasmic portion of the chain corresponds to 135-141 (KNFGRRK). Residues 142–162 (SWLVPTQYILGIFMIYLSTQV) traverse the membrane as a helical segment. Over 163–256 (DRLLGNIDGR…FQPQPRGIVT (94 aa)) the chain is Extracellular. A helical membrane pass occupies residues 257-277 (LSDFLFFWGTVFLITTTLVAL). Over 278–300 (LKKETREASVVKEETQGITDTYK) the chain is Cytoplasmic. A helical transmembrane segment spans residues 301–321 (LLFSIIKMPAVLAFCLLILTS). Residues 322 to 344 (KIGFSAADAVTGLKLVEEGVPKE) lie on the Extracellular side of the membrane. The chain crosses the membrane as a helical span at residues 345 to 365 (HLALLAVPMVPLQIILPLLIS). At 366–375 (KYTAGPQPLN) the chain is on the cytoplasmic side. Residues 376–396 (IFYKAMPYRLLLGLEYALLVW) form a helical membrane-spanning segment. Over 397 to 405 (WTPKVEHQG) the chain is Extracellular. A helical transmembrane segment spans residues 406–426 (GFPIYYYIIVLLSYALHQVTL). Topologically, residues 427-509 (YSMYVSIMAF…LGGSCVTALD (83 aa)) are cytoplasmic. A helical membrane pass occupies residues 510–530 (GYYVESIVCVLIGFGWWFFLG). Topologically, residues 531–550 (PKFKKLQDEGPSSWKCKRTN) are extracellular.

It belongs to the SLC33A transporter family. Homodimerizes. Expressed in brain at all developmental stages. Detected in hippocampus, hypothalamus, cerebellum, cortex, olfactory bulb, and the ventral and dorsal anterior olfactory nucleus.

Its subcellular location is the endoplasmic reticulum membrane. It catalyses the reaction acetyl-CoA(in) = acetyl-CoA(out). Acetyl-CoA transporter that mediates active acetyl-CoA import through the endoplasmic reticulum (ER) membrane into the ER lumen where specific ER-based acetyl-CoA:lysine acetyltransferases are responsible for the acetylation of ER-based protein substrates, such as BACE1. Necessary for O-acetylation of gangliosides. The protein is Acetyl-coenzyme A transporter 1 (Slc33a1) of Rattus norvegicus (Rat).